A 426-amino-acid chain; its full sequence is Protein TolB homolog (426 aa).

Residues 1 to 19 (MFLRSFLCLLCLLPSILYC) form the signal peptide.

This sequence belongs to the TolB family.

It localises to the periplasm. The protein is Protein TolB homolog of Chlamydia muridarum (strain MoPn / Nigg).